A 632-amino-acid chain; its full sequence is tRNA uridine 5-carboxymethylaminomethyl modification enzyme MnmG (632 aa).

FAD-binding positions include 16–21 (GAGHAG), Val128, and Ser183. Residues 206 to 225 (PRVNGNTIDYSKTEEEPGDK) form a disordered region. Over residues 216 to 225 (SKTEEEPGDK) the composition is skewed to basic and acidic residues. Position 277 to 291 (277 to 291 (GPRYCPSIEDKVVRF)) interacts with NAD(+). Residue Gln374 participates in FAD binding.

Belongs to the MnmG family. As to quaternary structure, homodimer. Heterotetramer of two MnmE and two MnmG subunits. FAD serves as cofactor.

It localises to the cytoplasm. In terms of biological role, NAD-binding protein involved in the addition of a carboxymethylaminomethyl (cmnm) group at the wobble position (U34) of certain tRNAs, forming tRNA-cmnm(5)s(2)U34. The polypeptide is tRNA uridine 5-carboxymethylaminomethyl modification enzyme MnmG (Lactobacillus acidophilus (strain ATCC 700396 / NCK56 / N2 / NCFM)).